The chain runs to 453 residues: tRNA modification GTPase MnmE (453 aa).

Residues R22, E79, and K119 each coordinate (6S)-5-formyl-5,6,7,8-tetrahydrofolate. Positions 215-376 (GMKVVIAGRP…LKQHLKSLMG (162 aa)) constitute a TrmE-type G domain. N225 contributes to the K(+) binding site. Residues 225–230 (NAGKSS), 244–250 (TEIAGTT), 269–272 (DTAG), and 334–337 (NKAD) each bind GTP. A Mg(2+)-binding site is contributed by S229. 3 residues coordinate K(+): T244, I246, and T249. Mg(2+) is bound at residue T250. (6S)-5-formyl-5,6,7,8-tetrahydrofolate is bound at residue K453.

The protein belongs to the TRAFAC class TrmE-Era-EngA-EngB-Septin-like GTPase superfamily. TrmE GTPase family. As to quaternary structure, homodimer. Heterotetramer of two MnmE and two MnmG subunits. The cofactor is K(+).

Its subcellular location is the cytoplasm. Functionally, exhibits a very high intrinsic GTPase hydrolysis rate. Involved in the addition of a carboxymethylaminomethyl (cmnm) group at the wobble position (U34) of certain tRNAs, forming tRNA-cmnm(5)s(2)U34. This Shewanella oneidensis (strain ATCC 700550 / JCM 31522 / CIP 106686 / LMG 19005 / NCIMB 14063 / MR-1) protein is tRNA modification GTPase MnmE.